A 197-amino-acid polypeptide reads, in one-letter code: Chromophore lyase CpcT/CpeT (197 aa).

Belongs to the CpcT/CpeT biliprotein lyase family.

Functionally, covalently attaches a chromophore to Cys residue(s) of phycobiliproteins. The protein is Chromophore lyase CpcT/CpeT of Synechococcus sp. (strain WH8103).